Consider the following 69-residue polypeptide: Cytochrome c oxidase subunit 8A, mitochondrial (69 aa).

The N-terminal 25 residues, 1–25 (MSVLTPLLLRGLTGSARRLPVPRAQ), are a transit peptide targeting the mitochondrion. The SIFI-degron motif lies at 2 to 19 (SVLTPLLLRGLTGSARRL). The Mitochondrial matrix segment spans residues 26–36 (VHSMPPEQKLG). A helical membrane pass occupies residues 37 to 60 (VLELAIGFTSCLVTFLLPAGWILS). Residues 61–69 (HLDSYKKRG) lie on the Mitochondrial intermembrane side of the membrane.

Belongs to the cytochrome c oxidase VIII family. Component of the cytochrome c oxidase (complex IV, CIV), a multisubunit enzyme composed of 14 subunits. The complex is composed of a catalytic core of 3 subunits MT-CO1, MT-CO2 and MT-CO3, encoded in the mitochondrial DNA, and 11 supernumerary subunits COX4I, COX5A, COX5B, COX6A, COX6B, COX6C, COX7A, COX7B, COX7C, COX8 and NDUFA4, which are encoded in the nuclear genome. The complex exists as a monomer or a dimer and forms supercomplexes (SCs) in the inner mitochondrial membrane with NADH-ubiquinone oxidoreductase (complex I, CI) and ubiquinol-cytochrome c oxidoreductase (cytochrome b-c1 complex, complex III, CIII), resulting in different assemblies (supercomplex SCI(1)III(2)IV(1) and megacomplex MCI(2)III(2)IV(2)). In terms of processing, in response to mitochondrial stress, the precursor protein is ubiquitinated by the SIFI complex in the cytoplasm before mitochondrial import, leading to its degradation. Within the SIFI complex, UBR4 initiates ubiquitin chain that are further elongated or branched by KCMF1.

Its subcellular location is the mitochondrion inner membrane. It participates in energy metabolism; oxidative phosphorylation. In terms of biological role, component of the cytochrome c oxidase, the last enzyme in the mitochondrial electron transport chain which drives oxidative phosphorylation. The respiratory chain contains 3 multisubunit complexes succinate dehydrogenase (complex II, CII), ubiquinol-cytochrome c oxidoreductase (cytochrome b-c1 complex, complex III, CIII) and cytochrome c oxidase (complex IV, CIV), that cooperate to transfer electrons derived from NADH and succinate to molecular oxygen, creating an electrochemical gradient over the inner membrane that drives transmembrane transport and the ATP synthase. Cytochrome c oxidase is the component of the respiratory chain that catalyzes the reduction of oxygen to water. Electrons originating from reduced cytochrome c in the intermembrane space (IMS) are transferred via the dinuclear copper A center (CU(A)) of subunit 2 and heme A of subunit 1 to the active site in subunit 1, a binuclear center (BNC) formed by heme A3 and copper B (CU(B)). The BNC reduces molecular oxygen to 2 water molecules using 4 electrons from cytochrome c in the IMS and 4 protons from the mitochondrial matrix. In Saimiri sciureus (Common squirrel monkey), this protein is Cytochrome c oxidase subunit 8A, mitochondrial (COX8A).